The following is a 286-amino-acid chain: Probable biotin transporter (286 aa).

2 EamA domains span residues 3–128 and 139–277; these read YLLF…AIIR and GFLL…LWVN. Transmembrane regions (helical) follow at residues 4–24, 26–46, 56–76, 81–101, 109–129, 136–156, 174–194, 203–223, 234–254, and 258–280; these read LLFV…YLAG, VDSY…FLPL, FVGG…VCLY, VLTV…VALF, FNFW…IIRY, FLQG…GQVL, FGYF…LFGD, LQWG…QFWW, TLAV…LLIW, and ADLP…NRLG.

It belongs to the drug/metabolite transporter (DMT) superfamily. 10 TMS drug/metabolite exporter (DME) (TC 2.A.7.3) family.

It is found in the cell inner membrane. It carries out the reaction biotin(in) = biotin(out). Uptake of biotin. This is Probable biotin transporter from Pseudomonas aeruginosa (strain ATCC 15692 / DSM 22644 / CIP 104116 / JCM 14847 / LMG 12228 / 1C / PRS 101 / PAO1).